A 248-amino-acid chain; its full sequence is Pyridoxine 5'-phosphate synthase (248 aa).

N12 provides a ligand contact to 3-amino-2-oxopropyl phosphate. 14-15 (DH) lines the 1-deoxy-D-xylulose 5-phosphate pocket. R23 contributes to the 3-amino-2-oxopropyl phosphate binding site. The active-site Proton acceptor is H48. The 1-deoxy-D-xylulose 5-phosphate site is built by R50 and H55. The active-site Proton acceptor is E75. T105 is a binding site for 1-deoxy-D-xylulose 5-phosphate. H196 acts as the Proton donor in catalysis. 3-amino-2-oxopropyl phosphate-binding positions include G197 and 218 to 219 (GH).

The protein belongs to the PNP synthase family. In terms of assembly, homooctamer; tetramer of dimers.

It is found in the cytoplasm. The enzyme catalyses 3-amino-2-oxopropyl phosphate + 1-deoxy-D-xylulose 5-phosphate = pyridoxine 5'-phosphate + phosphate + 2 H2O + H(+). The protein operates within cofactor biosynthesis; pyridoxine 5'-phosphate biosynthesis; pyridoxine 5'-phosphate from D-erythrose 4-phosphate: step 5/5. Catalyzes the complicated ring closure reaction between the two acyclic compounds 1-deoxy-D-xylulose-5-phosphate (DXP) and 3-amino-2-oxopropyl phosphate (1-amino-acetone-3-phosphate or AAP) to form pyridoxine 5'-phosphate (PNP) and inorganic phosphate. This is Pyridoxine 5'-phosphate synthase from Azotobacter vinelandii (strain DJ / ATCC BAA-1303).